The sequence spans 407 residues: Aspartate aminotransferase, cytoplasmic (407 aa).

L-aspartate-binding residues include G39, W136, and N189. K253 carries the post-translational modification N6-(pyridoxal phosphate)lysine. R381 is a binding site for L-aspartate.

Belongs to the class-I pyridoxal-phosphate-dependent aminotransferase family. Homodimer. Requires pyridoxal 5'-phosphate as cofactor.

The protein resides in the cytoplasm. The catalysed reaction is L-aspartate + 2-oxoglutarate = oxaloacetate + L-glutamate. Functionally, important for the metabolism of amino acids and Krebs-cycle related organic acids. In plants, it is involved in nitrogen metabolism and in aspects of carbon and energy metabolism. The polypeptide is Aspartate aminotransferase, cytoplasmic (Oryza sativa subsp. japonica (Rice)).